Here is a 179-residue protein sequence, read N- to C-terminus: Large ribosomal subunit protein uL5 (179 aa).

The protein belongs to the universal ribosomal protein uL5 family. As to quaternary structure, part of the 50S ribosomal subunit; part of the 5S rRNA/L5/L18/L25 subcomplex. Contacts the 5S rRNA and the P site tRNA. Forms a bridge to the 30S subunit in the 70S ribosome.

In terms of biological role, this is one of the proteins that bind and probably mediate the attachment of the 5S RNA into the large ribosomal subunit, where it forms part of the central protuberance. In the 70S ribosome it contacts protein S13 of the 30S subunit (bridge B1b), connecting the 2 subunits; this bridge is implicated in subunit movement. Contacts the P site tRNA; the 5S rRNA and some of its associated proteins might help stabilize positioning of ribosome-bound tRNAs. The chain is Large ribosomal subunit protein uL5 from Rickettsia akari (strain Hartford).